The chain runs to 282 residues: Bis(5'-nucleosyl)-tetraphosphatase, symmetrical (282 aa).

The protein belongs to the Ap4A hydrolase family.

It carries out the reaction P(1),P(4)-bis(5'-adenosyl) tetraphosphate + H2O = 2 ADP + 2 H(+). Hydrolyzes diadenosine 5',5'''-P1,P4-tetraphosphate to yield ADP. This chain is Bis(5'-nucleosyl)-tetraphosphatase, symmetrical, found in Salmonella paratyphi C (strain RKS4594).